An 802-amino-acid polypeptide reads, in one-letter code: DNA mismatch repair protein MutS (802 aa).

617–624 (GPNMGGKS) is an ATP binding site.

It belongs to the DNA mismatch repair MutS family.

In terms of biological role, this protein is involved in the repair of mismatches in DNA. It is possible that it carries out the mismatch recognition step. This protein has a weak ATPase activity. This chain is DNA mismatch repair protein MutS, found in Buchnera aphidicola subsp. Acyrthosiphon pisum (strain Tuc7).